We begin with the raw amino-acid sequence, 120 residues long: Flagellar protein FliT (120 aa).

The tract at residues 1–50 is required for homodimerization; it reads MTNFIPSLTDWHALHALSITMLDLAHSGKWDELIEQEMNYVQLVEGIARN. The interval 59–97 is fliD binding; sequence LINQAKEILNAVLRNEAELKTLLQHRMEELRQLIDQTGK.

It belongs to the FliT family. Homodimer. Interacts with FliD and FlhC.

Its subcellular location is the cytoplasm. The protein resides in the cytosol. Dual-function protein that regulates the transcription of class 2 flagellar operons and that also acts as an export chaperone for the filament-capping protein FliD. As a transcriptional regulator, acts as an anti-FlhDC factor; it directly binds FlhC, thus inhibiting the binding of the FlhC/FlhD complex to class 2 promoters, resulting in decreased expression of class 2 flagellar operons. As a chaperone, effects FliD transition to the membrane by preventing its premature polymerization, and by directing it to the export apparatus. The chain is Flagellar protein FliT from Citrobacter koseri (strain ATCC BAA-895 / CDC 4225-83 / SGSC4696).